A 150-amino-acid polypeptide reads, in one-letter code: UPF0178 protein Maqu_2186 (150 aa).

The protein belongs to the UPF0178 family.

In Marinobacter nauticus (strain ATCC 700491 / DSM 11845 / VT8) (Marinobacter aquaeolei), this protein is UPF0178 protein Maqu_2186.